The chain runs to 267 residues: Hydroxyacylglutathione hydrolase (267 aa).

His-55, His-57, Asp-59, His-60, His-121, Asp-138, and His-176 together coordinate Zn(2+).

It belongs to the metallo-beta-lactamase superfamily. Glyoxalase II family. Monomer. Requires Zn(2+) as cofactor.

The enzyme catalyses an S-(2-hydroxyacyl)glutathione + H2O = a 2-hydroxy carboxylate + glutathione + H(+). Its pathway is secondary metabolite metabolism; methylglyoxal degradation; (R)-lactate from methylglyoxal: step 2/2. Its function is as follows. Thiolesterase that catalyzes the hydrolysis of S-D-lactoyl-glutathione to form glutathione and D-lactic acid. The chain is Hydroxyacylglutathione hydrolase from Shewanella sp. (strain ANA-3).